Reading from the N-terminus, the 505-residue chain is GMP synthase [glutamine-hydrolyzing] (505 aa).

Residues 2–190 (SVVILDFGSQ…FLEICGVARD (189 aa)) enclose the Glutamine amidotransferase type-1 domain. The active-site Nucleophile is the C79. Catalysis depends on residues H165 and E167. The GMPS ATP-PPase domain occupies 191–380 (WNAEHIVDEL…LGLPDAIRMR (190 aa)). Residue 218 to 224 (SGGVDSS) coordinates ATP.

In terms of assembly, homodimer.

It carries out the reaction XMP + L-glutamine + ATP + H2O = GMP + L-glutamate + AMP + diphosphate + 2 H(+). The protein operates within purine metabolism; GMP biosynthesis; GMP from XMP (L-Gln route): step 1/1. In terms of biological role, catalyzes the synthesis of GMP from XMP. The protein is GMP synthase [glutamine-hydrolyzing] of Deinococcus geothermalis (strain DSM 11300 / CIP 105573 / AG-3a).